Here is a 478-residue protein sequence, read N- to C-terminus: Protein WVD2-like 7 (478 aa).

2 disordered regions span residues 201 to 326 and 385 to 420; these read DSAL…TGST and PMPS…SASI. The span at 208–217 shows a compositional bias: basic and acidic residues; that stretch reads AGSKLDEHAS. 2 stretches are compositionally biased toward polar residues: residues 219–232 and 264–277; these read KPSN…SSVN and GSSL…NVDA. The segment covering 278 to 289 has biased composition (basic and acidic residues); it reads KSQKELRPKKTI. Polar residues-rich tracts occupy residues 309-326 and 407-420; these read RCKT…TGST and VAQS…SASI.

This sequence belongs to the TPX2 family. Expressed in seedlings.

Its subcellular location is the cytoplasm. It is found in the cytoskeleton. Microtubule-associated protein (MAP) that regulates the orientation of interphase cortical microtubules. The polypeptide is Protein WVD2-like 7 (Arabidopsis thaliana (Mouse-ear cress)).